Here is a 185-residue protein sequence, read N- to C-terminus: NADH-quinone oxidoreductase subunit B (185 aa).

Residues cysteine 38, cysteine 39, cysteine 104, and cysteine 133 each coordinate [4Fe-4S] cluster. The segment covering 165 to 176 (AAEAYREEERQA) has biased composition (basic and acidic residues). The segment at 165–185 (AAEAYREEERQAARSALGPRS) is disordered.

It belongs to the complex I 20 kDa subunit family. As to quaternary structure, NDH-1 is composed of 14 different subunits. Subunits NuoB, C, D, E, F, and G constitute the peripheral sector of the complex. Requires [4Fe-4S] cluster as cofactor.

It localises to the cell membrane. The catalysed reaction is a quinone + NADH + 5 H(+)(in) = a quinol + NAD(+) + 4 H(+)(out). NDH-1 shuttles electrons from NADH, via FMN and iron-sulfur (Fe-S) centers, to quinones in the respiratory chain. The immediate electron acceptor for the enzyme in this species is believed to be ubiquinone. Couples the redox reaction to proton translocation (for every two electrons transferred, four hydrogen ions are translocated across the cytoplasmic membrane), and thus conserves the redox energy in a proton gradient. The sequence is that of NADH-quinone oxidoreductase subunit B from Thermomicrobium roseum (strain ATCC 27502 / DSM 5159 / P-2).